The sequence spans 123 residues: Small ribosomal subunit protein uS12cz/uS12cy (123 aa).

Belongs to the universal ribosomal protein uS12 family. Part of the 30S ribosomal subunit.

The protein localises to the plastid. It localises to the chloroplast. Functionally, with S4 and S5 plays an important role in translational accuracy. Located at the interface of the 30S and 50S subunits. The sequence is that of Small ribosomal subunit protein uS12cz/uS12cy (rps12-A) from Glycine max (Soybean).